The following is a 462-amino-acid chain: Acetyl-CoA decarbonylase/synthase complex subunit gamma (462 aa).

The 4Fe-4S domain occupies 1–60; sequence MAQLSAMDVYNLLPKANCGACGCKTCMEFATKLVNREAKPEDCPKLDDESLEKLQELLAP. 4 residues coordinate [4Fe-4S] cluster: Cys18, Cys21, Cys26, and Cys43.

Heterodimer of delta and gamma chains. The ACDS complex is made up of alpha, epsilon, beta, gamma and delta chains with a probable stoichiometry of (alpha(2)epsilon(2))(4)-beta(8)-(gamma(1)delta(1))(8). Corrinoid serves as cofactor. [4Fe-4S] cluster is required as a cofactor.

The enzyme catalyses 5,6,7,8-tetrahydrosarcinapterin + methyl-Co(III)-[corrinoid Fe-S protein] = 5-methyltetrahydrosarcinapterin + Co(I)-[corrinoid Fe-S protein] + H(+). Part of a complex that catalyzes the reversible cleavage of acetyl-CoA, allowing autotrophic growth from CO(2). This is Acetyl-CoA decarbonylase/synthase complex subunit gamma from Methanopyrus kandleri (strain AV19 / DSM 6324 / JCM 9639 / NBRC 100938).